The primary structure comprises 245 residues: MDTGGSARLCLALVLISLGVMLTATQKSVVSLDPPWIRILTGDKVTLICNGNNSSQMNSTKWIHNDSISNVKSSHWVIVSATIQDSGKYICQKQGFYKSKPVYLNVMQEWLLLQSSADVVLDNGSFDIRCRSWKKWKVHKVIYYKDDIAFKYSYDSNNISIRKATFNDSGSYHCTGYLNKVECKSDKFSIAVVKDYTIEYRWLQLIFPSLAVILFAVDTGLWFSTHKQFESILKIQKTGKGKKKG.

Positions 1 to 23 (MDTGGSARLCLALVLISLGVMLT) are cleaved as a signal peptide. The Extracellular segment spans residues 24-204 (ATQKSVVSLD…DYTIEYRWLQ (181 aa)). Ig-like domains are found at residues 28–103 (SVVS…KPVY) and 113–181 (LQSS…LNKV). A disulfide bridge connects residues cysteine 49 and cysteine 91. 7 N-linked (GlcNAc...) asparagine glycosylation sites follow: asparagine 52, asparagine 53, asparagine 58, asparagine 65, asparagine 123, asparagine 158, and asparagine 167. Cysteine 130 and cysteine 174 form a disulfide bridge. Residues 205 to 223 (LIFPSLAVILFAVDTGLWF) form a helical membrane-spanning segment. The Cytoplasmic portion of the chain corresponds to 224 to 245 (STHKQFESILKIQKTGKGKKKG).

As to quaternary structure, tetramer of an alpha chain, a beta chain, and two disulfide linked gamma chains. Interacts with IGHE (via CH3 region). In terms of tissue distribution, expressed in leukocytes and pinealocytes at night (at protein level).

It is found in the cell membrane. It localises to the secreted. Functionally, high-affinity receptor for immunoglobulin epsilon/IgE. Mediates IgE effector functions in myeloid cells. Upon IgE binding and antigen/allergen cross-linking initiates signaling pathways that lead to myeloid cell activation and differentiation. On mast cells, basophils and eosinophils stimulates the secretion of vasoactive amines, lipid mediators and cytokines that contribute to inflammatory response, tissue remodeling and cytotoxicity against microbes. Triggers the immediate hypersensitivity response to allergens as a host defense mechanism against helminth parasites, pathogenic bacteria and venom toxicity. When dysregulated, it can elicit harmful life-threatening allergic and anaphylactic reactions. The chain is High affinity immunoglobulin epsilon receptor subunit alpha (Fcer1a) from Rattus norvegicus (Rat).